A 320-amino-acid chain; its full sequence is Protease HtpX homolog (320 aa).

The next 2 membrane-spanning stretches (helical) occupy residues 6-26 (TAML…LIGG) and 28-48 (AGMM…YWNS). H130 provides a ligand contact to Zn(2+). E131 is a catalytic residue. Residue H134 coordinates Zn(2+). 2 helical membrane-spanning segments follow: residues 145–165 (ITAT…FFGG) and 173–193 (PLGF…AMLV). E202 is a Zn(2+) binding site. A disordered region spans residues 281–320 (GGMNVSTPPVRAANPSRKSRSVPDTGLGRGGSQPPKGPWS).

Belongs to the peptidase M48B family. Zn(2+) is required as a cofactor.

It is found in the cell inner membrane. This is Protease HtpX homolog from Rhizobium leguminosarum bv. trifolii (strain WSM2304).